Here is a 368-residue protein sequence, read N- to C-terminus: C-X-C chemokine receptor type 3 (368 aa).

Residues 1 to 53 lie on the Extracellular side of the membrane; that stretch reads MVLEVSDHQVLNDAEVAALLENFSSSYDYGENESDSCCTSPPCPQDFSLNFDR. Residue Asn-22 is glycosylated (N-linked (GlcNAc...) asparagine). Tyr-27 and Tyr-29 each carry sulfotyrosine. N-linked (GlcNAc...) asparagine glycosylation is present at Asn-32. The chain crosses the membrane as a helical span at residues 54–80; that stretch reads AFLPALYSLLFLLGLLGNGAVAAVLLS. Residues 81-89 are Cytoplasmic-facing; it reads RRTALSSTD. Residues 90 to 110 form a helical membrane-spanning segment; sequence TFLLHLAVADTLLVLTLPLWA. Topologically, residues 111–125 are extracellular; the sequence is VDAAVQWVFGSGLCK. A disulfide bond links Cys-124 and Cys-203. A helical transmembrane segment spans residues 126 to 147; that stretch reads VAGALFNINFYAGALLLACISF. Topologically, residues 148-169 are cytoplasmic; it reads DRYLNIVHATQLYRRGPPARVT. The helical transmembrane segment at 170–189 threads the bilayer; sequence LTCLAVWGLCLLFALPDFIF. Topologically, residues 190–212 are extracellular; the sequence is LSAHHDERLNATHCQYNFPQVGR. Residues 213-233 traverse the membrane as a helical segment; that stretch reads TALRVLQLVAGFLLPLLVMAY. The Cytoplasmic segment spans residues 234–255; the sequence is CYAHILAVLLVSRGQRRLRAMR. A helical transmembrane segment spans residues 256–277; sequence LVVVVVVAFALCWTPYHLVVLV. Residues 278 to 298 are Extracellular-facing; that stretch reads DILMDLGALARNCGRESRVDV. Residues 299-321 traverse the membrane as a helical segment; it reads AKSVTSGLGYMHCCLNPLLYAFV. Over 322–368 the chain is Cytoplasmic; sequence GVKFRERMWMLLLRLGCPNQRGLQRQPSSSRRDSSWSETSEASYSGL. Residues 342–368 form a disordered region; the sequence is RGLQRQPSSSRRDSSWSETSEASYSGL. The span at 357–368 shows a compositional bias: low complexity; it reads WSETSEASYSGL.

Belongs to the G-protein coupled receptor 1 family. Homomer. Forms heteromers with ACKR4. In terms of assembly, interacts with PF4/CXCL4. In terms of processing, sulfation on Tyr-27 and Tyr-29 is essential for CXCL10 binding and subsequent signal transduction induction. Post-translationally, N-glycosylated. In terms of tissue distribution, isoform 1 and isoform 2 are mainly expressed in heart, kidney, liver and skeletal muscle. Isoform 1 is also expressed in placenta. Isoform 2 is expressed in endothelial cells. Expressed in T-cells (at protein level).

The protein localises to the cell membrane. Functionally, receptor for the C-X-C chemokine CXCL9, CXCL10 and CXCL11 and mediates the proliferation, survival and angiogenic activity of human mesangial cells (HMC) through a heterotrimeric G-protein signaling pathway. Binds to CCL21. Probably promotes cell chemotaxis response. Upon activation by PF4, induces activated T-lymphocytes migration mediated via downstream Ras/extracellular signal-regulated kinase (ERK) signaling. In terms of biological role, receptor for the C-X-C chemokine CXCL4 and also mediates the inhibitory activities of CXCL9, CXCL10 and CXCL11 on the proliferation, survival and angiogenic activity of human microvascular endothelial cells (HMVEC) through a cAMP-mediated signaling pathway. Does not promote cell chemotaxis respons. Interaction with CXCL4 or CXCL10 leads to activation of the p38MAPK pathway and contributes to inhibition of angiogenesis. Overexpression in renal cancer cells down-regulates expression of the anti-apoptotic protein HMOX1 and promotes apoptosis. Its function is as follows. Mediates the activity of CXCL11. The chain is C-X-C chemokine receptor type 3 (CXCR3) from Homo sapiens (Human).